The following is a 344-amino-acid chain: Dihydroorotase (344 aa).

Residues histidine 14 and histidine 16 each coordinate Zn(2+). Substrate contacts are provided by residues 16 to 18 (HVR) and asparagine 42. Residues lysine 99, histidine 136, and histidine 174 each contribute to the Zn(2+) site. Lysine 99 carries the N6-carboxylysine modification. Histidine 136 serves as a coordination point for substrate. Leucine 219 contacts substrate. Aspartate 247 serves as a coordination point for Zn(2+). Residue aspartate 247 is part of the active site. 2 residues coordinate substrate: histidine 251 and alanine 263.

This sequence belongs to the metallo-dependent hydrolases superfamily. DHOase family. Class II DHOase subfamily. In terms of assembly, homodimer. Zn(2+) is required as a cofactor.

It catalyses the reaction (S)-dihydroorotate + H2O = N-carbamoyl-L-aspartate + H(+). Its pathway is pyrimidine metabolism; UMP biosynthesis via de novo pathway; (S)-dihydroorotate from bicarbonate: step 3/3. Its function is as follows. Catalyzes the reversible cyclization of carbamoyl aspartate to dihydroorotate. This Leptothrix cholodnii (strain ATCC 51168 / LMG 8142 / SP-6) (Leptothrix discophora (strain SP-6)) protein is Dihydroorotase.